The primary structure comprises 170 residues: Large ribosomal subunit protein uL11 (170 aa).

It belongs to the universal ribosomal protein uL11 family. As to quaternary structure, part of the ribosomal stalk of the 50S ribosomal subunit. Interacts with L10 and the large rRNA to form the base of the stalk. L10 forms an elongated spine to which L12 dimers bind in a sequential fashion forming a multimeric L10(L12)X complex.

In terms of biological role, forms part of the ribosomal stalk which helps the ribosome interact with GTP-bound translation factors. The sequence is that of Large ribosomal subunit protein uL11 from Sulfolobus acidocaldarius (strain ATCC 33909 / DSM 639 / JCM 8929 / NBRC 15157 / NCIMB 11770).